We begin with the raw amino-acid sequence, 362 residues long: Flotillin-like protein FloA 2 (362 aa).

Residues 24 to 44 form a helical membrane-spanning segment; that stretch reads TALLIGALVIFAGIVVVLFIF.

The protein belongs to the flotillin-like FloA family. As to quaternary structure, homooligomerizes.

The protein localises to the cell membrane. It localises to the membrane raft. Its function is as follows. Found in functional membrane microdomains (FMM) that may be equivalent to eukaryotic membrane rafts. FMMs are highly dynamic and increase in number as cells age. Flotillins are thought to be important factors in membrane fluidity. This Rhodopirellula baltica (strain DSM 10527 / NCIMB 13988 / SH1) protein is Flotillin-like protein FloA 2.